Reading from the N-terminus, the 524-residue chain is Cytokinin dehydrogenase 4 (524 aa).

The N-terminal stretch at 1 to 26 (MTNTLCLSLITLITLFISLTPTLIKS) is a signal peptide. Residues Asn39 and Asn58 are each glycosylated (N-linked (GlcNAc...) asparagine). One can recognise an FAD-binding PCMH-type domain in the interval 60 to 249 (TDENPGAVLC…TRARIALDHA (190 aa)). Residues Ala104, Gly106, and Gly108 each contribute to the FAD site. His109 is modified (pros-8alpha-FAD histidine). Ser110 and Gln114 together coordinate FAD. Residue Asn124 is glycosylated (N-linked (GlcNAc...) asparagine). Residues Asp173, Ser178, Ser184, Ile188, and Ile239 each contribute to the FAD site. N-linked (GlcNAc...) asparagine glycosylation occurs at Asn411. FAD is bound by residues Tyr482, Ser517, and Gln520.

The protein belongs to the oxygen-dependent FAD-linked oxidoreductase family. FAD serves as cofactor. Expressed in trichomes and in developing stomata of young growing leaves. Strong expression in stipules and in the root cap, but not detected in the root meristem.

Its subcellular location is the secreted. It is found in the extracellular space. It carries out the reaction N(6)-dimethylallyladenine + A + H2O = 3-methyl-2-butenal + adenine + AH2. In terms of biological role, catalyzes the oxidation of cytokinins, a family of N(6)-substituted adenine derivatives that are plant hormones, where the substituent is an isopentenyl group. The polypeptide is Cytokinin dehydrogenase 4 (CKX4) (Arabidopsis thaliana (Mouse-ear cress)).